The following is a 469-amino-acid chain: DENN domain-containing protein 2D (469 aa).

Residues 17-44 form a disordered region; that stretch reads LPRLRAGQSQNNPGEAVTEPERIQEHSP. The uDENN domain maps to 55 to 204; sequence EYLLVVSLKK…AFPAPGKTVT (150 aa). The 134-residue stretch at 226–359 folds into the cDENN domain; the sequence is HLEHVDFSVL…LQDDILDSLG (134 aa). The region spanning 361–445 is the dDENN domain; that stretch reads GINELKTSEQ…QEAEKSRNPP (85 aa).

Its subcellular location is the cytoplasm. Functionally, guanine nucleotide exchange factor (GEF) which may activate RAB9A and RAB9B. Promotes the exchange of GDP to GTP, converting inactive GDP-bound Rab proteins into their active GTP-bound form. This is DENN domain-containing protein 2D (Dennd2d) from Mus musculus (Mouse).